The chain runs to 520 residues: GMP synthase [glutamine-hydrolyzing] (520 aa).

Residues 8–202 (RLLIIDFGSQ…FVRLAGFSGD (195 aa)) form the Glutamine amidotransferase type-1 domain. C86 serves as the catalytic Nucleophile. Active-site residues include H177 and E179. The GMPS ATP-PPase domain occupies 203-395 (WTMGAYREQM…LGLPDSFIGR (193 aa)). 230–236 (SGGVDSS) lines the ATP pocket.

In terms of assembly, homodimer.

It catalyses the reaction XMP + L-glutamine + ATP + H2O = GMP + L-glutamate + AMP + diphosphate + 2 H(+). It participates in purine metabolism; GMP biosynthesis; GMP from XMP (L-Gln route): step 1/1. Its function is as follows. Catalyzes the synthesis of GMP from XMP. This is GMP synthase [glutamine-hydrolyzing] from Ruegeria sp. (strain TM1040) (Silicibacter sp.).